Reading from the N-terminus, the 86-residue chain is Small ribosomal subunit protein uS17 (86 aa).

The protein belongs to the universal ribosomal protein uS17 family. Part of the 30S ribosomal subunit.

One of the primary rRNA binding proteins, it binds specifically to the 5'-end of 16S ribosomal RNA. This Helicobacter pylori (strain P12) protein is Small ribosomal subunit protein uS17.